A 156-amino-acid chain; its full sequence is Putative pre-16S rRNA nuclease (156 aa).

It belongs to the YqgF nuclease family.

The protein localises to the cytoplasm. Functionally, could be a nuclease involved in processing of the 5'-end of pre-16S rRNA. The polypeptide is Putative pre-16S rRNA nuclease (Rickettsia typhi (strain ATCC VR-144 / Wilmington)).